We begin with the raw amino-acid sequence, 359 residues long: Guanine nucleotide-binding protein G(q) subunit alpha (359 aa).

2 S-palmitoyl cysteine lipidation sites follow: Cys-9 and Cys-10. One can recognise a G-alpha domain in the interval 38-359 (RELKLLLLGT…QLNLKEYNLV (322 aa)). The G1 motif stretch occupies residues 41 to 54 (KLLLLGTGESGKST). The GTP site is built by Ser-50, Gly-51, Lys-52, Ser-53, Thr-54, Ser-156, Leu-180, Arg-181, and Arg-183. A Mg(2+)-binding site is contributed by Ser-53. Residues 178 to 186 (DVLRVRVPT) are G2 motif. Thr-186 serves as a coordination point for Mg(2+). Residues 201-210 (FRMVDVGGQR) form a G3 motif region. Gln-209 carries the post-translational modification 5-glutamyl histamine. Residues 270-277 (ILFLNKKD) are G4 motif. Asn-274, Lys-275, Asp-277, and Ala-331 together coordinate GTP. The interval 329-334 (TCATDT) is G5 motif.

It belongs to the G-alpha family. G(q) subfamily. G proteins are composed of 3 units; alpha, beta and gamma. The alpha chain contains the guanine nucleotide binding site. Interacts (GDP-bound form) with RIC8A (via C-terminus); promoting GNAQ folding and association with the plasma membrane. Binds NHERF1. Forms a complex with PECAM1 and BDKRB2. Interacts with GAS2L2. Post-translationally, palmitoylated by ZDHHC3 and ZDHHC7. Palmitoylation occurs in the Golgi and participates in the localization of GNAQ to the plasma membrane. Histaminylated at Gln-209 residues by TGM2.

It is found in the cell membrane. It localises to the golgi apparatus. The protein localises to the nucleus. Its subcellular location is the nucleus membrane. The enzyme catalyses GTP + H2O = GDP + phosphate + H(+). Functionally, guanine nucleotide-binding proteins (G proteins) function as transducers downstream of G protein-coupled receptors (GPCRs) in numerous signaling cascades. The alpha chain contains the guanine nucleotide binding site and alternates between an active, GTP-bound state and an inactive, GDP-bound state. Signaling by an activated GPCR promotes GDP release and GTP binding. The alpha subunit has a low GTPase activity that converts bound GTP to GDP, thereby terminating the signal. Both GDP release and GTP hydrolysis are modulated by numerous regulatory proteins. Signaling is mediated via phospholipase C-beta-dependent inositol lipid hydrolysis for signal propagation: activates phospholipase C-beta: following GPCR activation, GNAQ activates PLC-beta (PLCB1, PLCB2, PLCB3 or PLCB4), leading to production of diacylglycerol (DAG) and inositol 1,4,5-trisphosphate (IP3). Required for platelet activation. Regulates B-cell selection and survival and is required to prevent B-cell-dependent autoimmunity. Regulates chemotaxis of BM-derived neutrophils and dendritic cells (in vitro). Transduces FFAR4 signaling in response to long-chain fatty acids (LCFAs). Together with GNA11, required for heart development. The chain is Guanine nucleotide-binding protein G(q) subunit alpha (Gnaq) from Mus musculus (Mouse).